The primary structure comprises 559 residues: MREAFHKYRDIEIRAPRGTALNARSWLCEAPLRLLMNNLDPEVAENPKELVVYGGIGRAARNWECFDRIVECLKNLEEDETLLIQSGKPVGVFRTQRDAPRVLIANSNLVPHWATWEHFHELDARGLAMFGQMTAGSWIYIGSQGIVQGTFETFVEAGRQHYGGDLRGRWLLSAGLGGMGGAQPLAATLAGASALLVECQQSRIDFRLKTGYLDEQARDLDDALARIARYRGEGRAVSVGLCANAADILPELVRRGVRPDLVTDQTSAHDPLNGYLPRGWSWAEYRERAAREPAATVAAAKRSMAGHVRAMLAFHERGVPVFDYGNNIRQMARDEGVENAFDFPGFVPAYIRPLFCRGIGPFRWVALSGEAEDIYRTDARVKELIPDDPHLHRWLGMARERIRFQGLPARICWVGLGQRARLGLAFNEMVRRGELKAPVVIGRDHLDSGSVASPNRETEAMRDGSDAVSDWPLLNALLNTASGATWVSLHHGGGVGMGYSQHAGVAIVCDGTDEAAARIARVLHNDPASGVMRHADAGYPEAIACARERGLKLPMLGDA.

NAD(+) contacts are provided by residues 54-55 (GG), Gln-132, 178-180 (GMG), Glu-198, Arg-203, 244-245 (NA), 265-269 (QTSAH), 275-276 (YL), and Tyr-324. Cys-412 is an active-site residue. Gly-494 provides a ligand contact to NAD(+).

It belongs to the urocanase family. NAD(+) is required as a cofactor.

Its subcellular location is the cytoplasm. It carries out the reaction 4-imidazolone-5-propanoate = trans-urocanate + H2O. The protein operates within amino-acid degradation; L-histidine degradation into L-glutamate; N-formimidoyl-L-glutamate from L-histidine: step 2/3. Catalyzes the conversion of urocanate to 4-imidazolone-5-propionate. This chain is Urocanate hydratase, found in Azotobacter vinelandii (strain DJ / ATCC BAA-1303).